The primary structure comprises 891 residues: Inter-alpha-trypsin inhibitor heavy chain H3 (891 aa).

Residues 1-20 (MALAQWPYLILALLSGLAVS) form the signal peptide. Residues 21–34 (GFPRNPSLLLGKRS) constitute a propeptide that is removed on maturation. The VIT domain occupies 29–158 (LLGKRSLPGR…KVTFELTYEE (130 aa)). Asn-91 carries N-linked (GlcNAc...) asparagine glycosylation. The 184-residue stretch at 284–467 (SVVFVIDVSG…LQLQGFYEEV (184 aa)) folds into the VWFA domain. The residue at position 651 (Asp-651) is an Aspartate 1-(chondroitin 4-sulfate)-ester. Positions 652–891 (PHFIIQIPEK…HRDYIVPNLF (240 aa)) are excised as a propeptide.

Belongs to the ITIH family. In terms of assembly, I-alpha-I plasma protease inhibitors are assembled from one or two heavy chains (H1, H2 or H3) and one light chain, bikunin. Inter-alpha-inhibitor (I-alpha-I) is composed of H1, H2 and bikunin, inter-alpha-like inhibitor (I-alpha-LI) of H2 and bikunin, and pre-alpha-inhibitor (P-alpha-I) of H3 and bikunin.

It is found in the secreted. Its function is as follows. May act as a carrier of hyaluronan in serum or as a binding protein between hyaluronan and other matrix protein, including those on cell surfaces in tissues to regulate the localization, synthesis and degradation of hyaluronan which are essential to cells undergoing biological processes. This is Inter-alpha-trypsin inhibitor heavy chain H3 (ITIH3) from Bos taurus (Bovine).